A 207-amino-acid chain; its full sequence is Outer-membrane lipoprotein LolB (207 aa).

A signal peptide spans 1–21 (MPLPDFRLIRLLPLASLVLTA). Cys22 carries N-palmitoyl cysteine lipidation. Residue Cys22 is the site of S-diacylglycerol cysteine attachment.

The protein belongs to the LolB family. In terms of assembly, monomer.

Its subcellular location is the cell outer membrane. In terms of biological role, plays a critical role in the incorporation of lipoproteins in the outer membrane after they are released by the LolA protein. The protein is Outer-membrane lipoprotein LolB of Escherichia fergusonii (strain ATCC 35469 / DSM 13698 / CCUG 18766 / IAM 14443 / JCM 21226 / LMG 7866 / NBRC 102419 / NCTC 12128 / CDC 0568-73).